The chain runs to 535 residues: MSTRDLPHSFSELSYGWVKRIRAEFTVGKSKEQLLAEDYHSTTDEDSEVVTSVKANSLWPAFASGAGLFSDGYVNNSISTVLFCLKKIYPDEITKSNAINNIASIAFVGTVVGQLGFGYISDRIARKGGMMAANVMLIFFTLMCAVGSWGVTVQGFFACLTVWRFFLGVAIGAEYPTSSVIASEFANQLPPGKRNRYFSWFTNAMIDSGFVVSAFVPFVLIWIFTEKHLRALWRVAIGLGVIPPLSLFFMRLKMKNSSSFQKLHMKNVKYRDYPWWLIVKFYWFRLTIVSLIWFIYDFSAYSFGNFNTIIIGEIIPEAPIWKQWGWSIVFNLFYIPGAFLGAISADYIGPRLTLALGVGIQGVIGIAMSACLNSLKKHIAGFVVVFGIFTTFGEFGPGDNIGLLASKTSATAIRGQYYGIAAAIGKIGAFVGTWVFPAIQSKYANNANPDLQLQVPFYISSALCLFSACLAIFFCPQVGQDAIYKEDHDFVQYLSNNGFDINMLGEGGDVREVCRESDSLEKGKRDDFQVDNNSL.

The helical transmembrane segment at 49-69 threads the bilayer; the sequence is VVTSVKANSLWPAFASGAGLF. N-linked (GlcNAc...) asparagine glycosylation occurs at asparagine 75. Transmembrane regions (helical) follow at residues 101–121, 137–157, 165–185, 204–224, and 232–252; these read NIASIAFVGTVVGQLGFGYIS, LIFFTLMCAVGSWGVTVQGFF, FFLGVAIGAEYPTSSVIASEF, AMIDSGFVVSAFVPFVLIWIF, and LWRVAIGLGVIPPLSLFFMRL. Asparagine 256 is a glycosylation site (N-linked (GlcNAc...) asparagine). 6 helical membrane passes run 275–295, 324–344, 352–372, 378–398, 419–439, and 455–475; these read WWLIVKFYWFRLTIVSLIWFI, WGWSIVFNLFYIPGAFLGAIS, LTLALGVGIQGVIGIAMSACL, HIAGFVVVFGIFTTFGEFGPG, GIAAAIGKIGAFVGTWVFPAI, and VPFYISSALCLFSACLAIFFC. Asparagine 532 carries N-linked (GlcNAc...) asparagine glycosylation.

This sequence belongs to the major facilitator superfamily. Sugar transporter (TC 2.A.1.1) family.

Its subcellular location is the cell membrane. It catalyses the reaction sn-glycerol 3-phosphocholine(out) = sn-glycerol 3-phosphocholine(in). Its function is as follows. Glycerophosphodiester transporter that mediates uptake of glycerophosphocholine (GroPCho) with GIT4. GIT3 acts as the major GroPCho permease. Does not possess detectable glycerophosphoinositol (GroPIns) transport activity. The expanded ability to utilize GroPIns and GroPCho results from the organism's pathogenic nature and its need to occupy a variety of environments within its host organism. This possibility is buttressed by the fact that GroPIns and GroPCho are present and abundant in human fluids. In Candida albicans (strain SC5314 / ATCC MYA-2876) (Yeast), this protein is Major glycerophosphoinositol permease GIT3.